A 728-amino-acid polypeptide reads, in one-letter code: Putative auxin response factor 20 (728 aa).

Residues 119–233 (FFEKQLSPAD…ELLVGVRRAP (115 aa)) constitute a DNA-binding region (TF-B3 1). Composition is skewed to low complexity over residues 665–689 (PQGSDEEAAAATTSTAHAGDATTSA) and 700–712 (ASSSSSSAPIIPS). The segment at 665 to 728 (PQGSDEEAAA…IVNPRDGSQG (64 aa)) is disordered.

The protein belongs to the ARF family. As to quaternary structure, homo and heterodimers.

It localises to the nucleus. Functionally, auxin response factors (ARFs) are transcriptional factors that bind specifically to the DNA sequence 5'-TGTCTC-3' found in the auxin-responsive promoter elements (AuxREs). The sequence is that of Putative auxin response factor 20 (ARF20) from Oryza sativa subsp. japonica (Rice).